The following is a 164-amino-acid chain: HTH-type transcriptional regulator IscR (164 aa).

One can recognise an HTH rrf2-type domain in the interval arginine 2–lysine 131. The segment at residues leucine 28–lysine 51 is a DNA-binding region (H-T-H motif). [2Fe-2S] cluster is bound by residues cysteine 92, cysteine 98, and cysteine 104. The tract at residues aspartate 140 to alanine 164 is disordered. Polar residues predominate over residues glycine 152 to alanine 164.

[2Fe-2S] cluster serves as cofactor.

Functionally, regulates the transcription of several operons and genes involved in the biogenesis of Fe-S clusters and Fe-S-containing proteins. The sequence is that of HTH-type transcriptional regulator IscR from Xenorhabdus nematophila (strain ATCC 19061 / DSM 3370 / CCUG 14189 / LMG 1036 / NCIMB 9965 / AN6).